The chain runs to 272 residues: NH(3)-dependent NAD(+) synthetase (272 aa).

Position 45 to 52 (45 to 52 (GISGGQDS)) interacts with ATP. Position 51 (Asp51) interacts with Mg(2+). Arg138 lines the deamido-NAD(+) pocket. Thr158 is a binding site for ATP. Glu163 contacts Mg(2+). Residues Lys171 and Asp178 each contribute to the deamido-NAD(+) site. Positions 187 and 209 each coordinate ATP. 258–259 (HK) contributes to the deamido-NAD(+) binding site.

Belongs to the NAD synthetase family. As to quaternary structure, homodimer.

It catalyses the reaction deamido-NAD(+) + NH4(+) + ATP = AMP + diphosphate + NAD(+) + H(+). Its pathway is cofactor biosynthesis; NAD(+) biosynthesis; NAD(+) from deamido-NAD(+) (ammonia route): step 1/1. Catalyzes the ATP-dependent amidation of deamido-NAD to form NAD. Uses ammonia as a nitrogen source. This is NH(3)-dependent NAD(+) synthetase from Bacillus cereus (strain 03BB102).